We begin with the raw amino-acid sequence, 713 residues long: Ribosomal RNA large subunit methyltransferase K/L (713 aa).

Residues 43–154 form the THUMP domain; the sequence is LAYRITLWTR…NGVITIAMNF (112 aa).

It belongs to the methyltransferase superfamily. RlmKL family.

The protein localises to the cytoplasm. It carries out the reaction guanosine(2445) in 23S rRNA + S-adenosyl-L-methionine = N(2)-methylguanosine(2445) in 23S rRNA + S-adenosyl-L-homocysteine + H(+). The enzyme catalyses guanosine(2069) in 23S rRNA + S-adenosyl-L-methionine = N(2)-methylguanosine(2069) in 23S rRNA + S-adenosyl-L-homocysteine + H(+). In terms of biological role, specifically methylates the guanine in position 2445 (m2G2445) and the guanine in position 2069 (m7G2069) of 23S rRNA. The polypeptide is Ribosomal RNA large subunit methyltransferase K/L (Shewanella sp. (strain MR-4)).